A 392-amino-acid chain; its full sequence is MANKRNEDIELGPAEGRGSTDKDPFLARRSSSQPNRPQQAGPFGGYFDKIDHSPGASIIAYCLSSISMTVVNKYVVSGSEWNLNFFYLAVQSLVCTAAILICKQLGMFQNLAAFDSTKAKKWFPISLLLVGMIYTSTKALQFLSVPVYTIFKNLTIIVVAYGEVLWFGGSVTPMALLSFGLMVLSSVIAAWADIQAAVEGVGHTAEATDAISTLNAGYAWMGMNVFCTAAYLLGMRKVIKKMNFKDYDTMFYNNLLTIPVLIVFSLLFEDWSNDNLIKNFPVETRNSLFIGMIYSGLAAIFISYCSAWCIRVTSSTTYSMVGALNKLPLAISGLIFFDAPVTFGSVTAIFVGFVSGLVYTWSKTRQKVSQILPTTQPTMSASAASNRDAANA.

The tract at residues 1–40 is disordered; sequence MANKRNEDIELGPAEGRGSTDKDPFLARRSSSQPNRPQQA. Topologically, residues 1-55 are cytoplasmic; sequence MANKRNEDIELGPAEGRGSTDKDPFLARRSSSQPNRPQQAGPFGGYFDKIDHSPG. Residues 29–38 show a composition bias toward polar residues; that stretch reads RSSSQPNRPQ. A helical transmembrane segment spans residues 56–76; that stretch reads ASIIAYCLSSISMTVVNKYVV. The Lumenal segment spans residues 77 to 80; that stretch reads SGSE. The chain crosses the membrane as a helical span at residues 81–101; that stretch reads WNLNFFYLAVQSLVCTAAILI. The Cytoplasmic segment spans residues 102-121; sequence CKQLGMFQNLAAFDSTKAKK. The chain crosses the membrane as a helical span at residues 122-144; the sequence is WFPISLLLVGMIYTSTKALQFLS. The Lumenal portion of the chain corresponds to 145–149; it reads VPVYT. A helical membrane pass occupies residues 150 to 168; it reads IFKNLTIIVVAYGEVLWFG. The Cytoplasmic portion of the chain corresponds to 169–174; that stretch reads GSVTPM. A helical membrane pass occupies residues 175–198; sequence ALLSFGLMVLSSVIAAWADIQAAV. The Lumenal portion of the chain corresponds to 199–213; it reads EGVGHTAEATDAIST. A helical transmembrane segment spans residues 214–234; that stretch reads LNAGYAWMGMNVFCTAAYLLG. The Cytoplasmic portion of the chain corresponds to 235 to 248; that stretch reads MRKVIKKMNFKDYD. A helical transmembrane segment spans residues 249-269; it reads TMFYNNLLTIPVLIVFSLLFE. Over 270-287 the chain is Lumenal; that stretch reads DWSNDNLIKNFPVETRNS. The chain crosses the membrane as a helical span at residues 288–308; the sequence is LFIGMIYSGLAAIFISYCSAW. The Cytoplasmic segment spans residues 309-316; it reads CIRVTSST. Residues 317–337 form a helical membrane-spanning segment; the sequence is TYSMVGALNKLPLAISGLIFF. The Lumenal portion of the chain corresponds to 338–342; the sequence is DAPVT. The helical transmembrane segment at 343–361 threads the bilayer; sequence FGSVTAIFVGFVSGLVYTW. At 362–392 the chain is on the cytoplasmic side; it reads SKTRQKVSQILPTTQPTMSASAASNRDAANA.

This sequence belongs to the TPT transporter family. SLC35D subfamily. In terms of assembly, homooligomer.

It localises to the golgi apparatus membrane. Its subcellular location is the cytoplasmic vesicle membrane. The protein resides in the endoplasmic reticulum membrane. Its function is as follows. Involved in the import of GDP-mannose from the cytoplasm into the Golgi lumen. This chain is GDP-mannose transporter (vrg-4), found in Neurospora crassa (strain ATCC 24698 / 74-OR23-1A / CBS 708.71 / DSM 1257 / FGSC 987).